Reading from the N-terminus, the 119-residue chain is MGTDNKSKVEARASARYFKMSANKARRVINQIRGRSYEQALILLEFMPYRACYAILQLISSAAANANHNLGLSRANPFISEAKVDESTLFKRFQPRAQGRGYPIHKPTCHITITMIEKT.

The protein belongs to the universal ribosomal protein uL22 family. As to quaternary structure, part of the 50S ribosomal subunit.

Its subcellular location is the plastid. The protein localises to the chloroplast. This protein binds specifically to 23S rRNA. In terms of biological role, the globular domain of the protein is located near the polypeptide exit tunnel on the outside of the subunit, while an extended beta-hairpin is found that lines the wall of the exit tunnel in the center of the 70S ribosome. This Angiopteris evecta (Mule's foot fern) protein is Large ribosomal subunit protein uL22c (rpl22).